The chain runs to 458 residues: Chondroitin hydrolase (458 aa).

Positions 1–22 (MVIVWYHQLLLVLLIFIGAAKG) are cleaved as a signal peptide. Residues 358–401 (NLDKCRMERCEGRGECYLPRPKTNPAIYNFACRCERPYFGKSCE) form the EGF-like domain. Intrachain disulfides connect C362/C373, C367/C389, and C391/C400.

It belongs to the glycosyl hydrolase 56 family.

Its function is as follows. Endo-beta-galactosaminidase that specifically hydrolyzes chondroitin, releasing GlcUA-beta-(1-&gt;3)-GalNAc-beta-(1-&gt;4)-GlcUA-beta-(1-&gt;3)-GalNAc as the main product. Also hydrolyzes to a lesser extent chondroitin sulfates (CS-A, CS-C) and hyaluronic acid. May regulate the function of chondroitin in cell division. The polypeptide is Chondroitin hydrolase (Caenorhabditis elegans).